The chain runs to 152 residues: Calcium-binding protein SPEC 1A (152 aa).

EF-hand domains follow at residues 10 to 45 (EEVT…TGKS), 46 to 81 (YTDK…QMVK), 84 to 119 (WKEE…SKPP), and 120 to 152 (MKRK…IKSC). Positions 23, 25, 27, 29, 34, 59, 61, 63, 65, 70, 97, 99, 101, 103, 108, 133, 135, 137, 139, and 144 each coordinate Ca(2+). The interval 95–121 (DMDKDGNGSLSPQELREALSASKPPMK) is disordered.

As to expression, found in cell lineages giving rise to the aboral ectoderm, a squamous epithelium covering the surface of the late stage embryo and larva.

Calcium-binding protein involved in larval development and metamorphosis. Likely to function as calcium buffers mediating the transport of calcium from the sea water to the blastocoel where calcium is required for skeleton formation. This Strongylocentrotus purpuratus (Purple sea urchin) protein is Calcium-binding protein SPEC 1A (SPEC1).